The chain runs to 584 residues: UvrABC system protein C (584 aa).

In terms of domain architecture, GIY-YIG spans 14 to 91 (HKPGCYLWKD…IKTHLPKYNI (78 aa)). The UVR domain occupies 192 to 227 (DHILMILQTKEQHAVTKLDFENAQKYAEQQKALTSI).

This sequence belongs to the UvrC family. In terms of assembly, interacts with UvrB in an incision complex.

Its subcellular location is the cytoplasm. In terms of biological role, the UvrABC repair system catalyzes the recognition and processing of DNA lesions. UvrC both incises the 5' and 3' sides of the lesion. The N-terminal half is responsible for the 3' incision and the C-terminal half is responsible for the 5' incision. This is UvrABC system protein C from Ureaplasma parvum serovar 3 (strain ATCC 27815 / 27 / NCTC 11736).